The primary structure comprises 98 residues: Bombyxin E-1 (98 aa).

Residues 1-19 (MNRPVFLVLLLTGFLCIAA) form the signal peptide. Gln20 is subject to Pyrrolidone carboxylic acid. Cystine bridges form between Cys29-Cys85, Cys41-Cys98, and Cys84-Cys89. The propeptide at 50-75 (SESSLASYSSRGWPWLPTPNFNKRAI) is c peptide like.

Belongs to the insulin family. As to quaternary structure, heterodimer of a B chain and an A chain linked by two disulfide bonds.

It is found in the secreted. PTTH is a brain peptide responsible for activation of prothoracic glands to produce ecdysone in insects. The chain is Bombyxin E-1 (BBXE1) from Bombyx mori (Silk moth).